A 28-amino-acid polypeptide reads, in one-letter code: Chassatide C11 (28 aa).

Intrachain disulfides connect Cys-3–Cys-19, Cys-7–Cys-21, and Cys-12–Cys-26. The residue at position 16 (Met-16) is a Methionine sulfoxide; in form chassatide chaC11A.

The protein belongs to the cyclotide family. Bracelet subfamily. Expressed in fruit, pedicel and stem but not in leaf and root (at protein level).

Its function is as follows. Chassatide C11: Probably participates in a plant defense mechanism. Active against E.coli ATCC 25922 (MIC=8.5 uM) but not against S.aureus ATCC 12600 or S.epidermidis ATCC 14990. Has cytotoxic and hemolytic activity. Chassatide C11A: Probably participates in a plant defense mechanism. Has no activity against bacteria up to a concentration of 80 uM. Has no cytotoxic and no hemolytic activity. The polypeptide is Chassatide C11 (Chassalia chartacea (Chassalia curviflora)).